The following is a 124-amino-acid chain: Small ribosomal subunit protein uS12 (124 aa).

The residue at position 89 (Asp89) is a 3-methylthioaspartic acid.

This sequence belongs to the universal ribosomal protein uS12 family. In terms of assembly, part of the 30S ribosomal subunit. Contacts proteins S8 and S17. May interact with IF1 in the 30S initiation complex.

Its function is as follows. With S4 and S5 plays an important role in translational accuracy. In terms of biological role, interacts with and stabilizes bases of the 16S rRNA that are involved in tRNA selection in the A site and with the mRNA backbone. Located at the interface of the 30S and 50S subunits, it traverses the body of the 30S subunit contacting proteins on the other side and probably holding the rRNA structure together. The combined cluster of proteins S8, S12 and S17 appears to hold together the shoulder and platform of the 30S subunit. This is Small ribosomal subunit protein uS12 from Pasteurella multocida (strain Pm70).